Here is a 124-residue protein sequence, read N- to C-terminus: Small ribosomal subunit protein uS12 (124 aa).

Positions 1–32 are disordered; that stretch reads MPTINQLVRKGRRDKTAKVKTAALKGSPQRRG. 3-methylthioaspartic acid is present on Asp-89. Positions 104-124 are disordered; that stretch reads TQGVKGRKQARSRYGAKKEKS. Positions 108-118 are enriched in basic residues; sequence KGRKQARSRYG.

It belongs to the universal ribosomal protein uS12 family. As to quaternary structure, part of the 30S ribosomal subunit. Contacts proteins S8 and S17. May interact with IF1 in the 30S initiation complex.

Its function is as follows. With S4 and S5 plays an important role in translational accuracy. Interacts with and stabilizes bases of the 16S rRNA that are involved in tRNA selection in the A site and with the mRNA backbone. Located at the interface of the 30S and 50S subunits, it traverses the body of the 30S subunit contacting proteins on the other side and probably holding the rRNA structure together. The combined cluster of proteins S8, S12 and S17 appears to hold together the shoulder and platform of the 30S subunit. The polypeptide is Small ribosomal subunit protein uS12 (Rhodococcus jostii (strain RHA1)).